Here is a 352-residue protein sequence, read N- to C-terminus: 4-hydroxy-3-methylbut-2-en-1-yl diphosphate synthase (flavodoxin) (352 aa).

[4Fe-4S] cluster-binding residues include C262, C265, C297, and E304.

The protein belongs to the IspG family. Requires [4Fe-4S] cluster as cofactor.

It carries out the reaction (2E)-4-hydroxy-3-methylbut-2-enyl diphosphate + oxidized [flavodoxin] + H2O + 2 H(+) = 2-C-methyl-D-erythritol 2,4-cyclic diphosphate + reduced [flavodoxin]. It participates in isoprenoid biosynthesis; isopentenyl diphosphate biosynthesis via DXP pathway; isopentenyl diphosphate from 1-deoxy-D-xylulose 5-phosphate: step 5/6. Its function is as follows. Converts 2C-methyl-D-erythritol 2,4-cyclodiphosphate (ME-2,4cPP) into 1-hydroxy-2-methyl-2-(E)-butenyl 4-diphosphate. The chain is 4-hydroxy-3-methylbut-2-en-1-yl diphosphate synthase (flavodoxin) from Campylobacter concisus (strain 13826).